The chain runs to 122 residues: Large ribosomal subunit protein bL12 (122 aa).

It belongs to the bacterial ribosomal protein bL12 family. In terms of assembly, homodimer. Part of the ribosomal stalk of the 50S ribosomal subunit. Forms a multimeric L10(L12)X complex, where L10 forms an elongated spine to which 2 to 4 L12 dimers bind in a sequential fashion. Binds GTP-bound translation factors.

Functionally, forms part of the ribosomal stalk which helps the ribosome interact with GTP-bound translation factors. Is thus essential for accurate translation. The sequence is that of Large ribosomal subunit protein bL12 from Fusobacterium nucleatum subsp. nucleatum (strain ATCC 25586 / DSM 15643 / BCRC 10681 / CIP 101130 / JCM 8532 / KCTC 2640 / LMG 13131 / VPI 4355).